The sequence spans 217 residues: MDASDRSMAVKRMEMVQSLRQKGLVNERVLDAMQRIERHRFVDRESSVSAYEDSAYPIGYGQTISQPYTVAYMTTLLLERCPPPGKVLEIGTGSGYQAAILDALGYRVYSVERIPELHDRVVGLFRSLGLAISCRVGDGSLGWEEEAPFDGIMVTAAAPRCPEHLLEQLGDNGCLVIPVGEHNMQQMTVYRRVGERFEKELFHHFAFVPLIGREGWN.

Ser-65 is a catalytic residue.

Belongs to the methyltransferase superfamily. L-isoaspartyl/D-aspartyl protein methyltransferase family.

It localises to the cytoplasm. The catalysed reaction is [protein]-L-isoaspartate + S-adenosyl-L-methionine = [protein]-L-isoaspartate alpha-methyl ester + S-adenosyl-L-homocysteine. Functionally, catalyzes the methyl esterification of L-isoaspartyl residues in peptides and proteins that result from spontaneous decomposition of normal L-aspartyl and L-asparaginyl residues. It plays a role in the repair and/or degradation of damaged proteins. In Chlorobium limicola (strain DSM 245 / NBRC 103803 / 6330), this protein is Protein-L-isoaspartate O-methyltransferase.